We begin with the raw amino-acid sequence, 377 residues long: MTTENFGFKVLARDGAARQGEISMPRGVVRTPAFMPVGTAGTVKAMYMDQVKELGADIILGNTYHLMLRPGAERVARLGGLHEFGGWKGPILTDSGGFQVMSLAQLRKLNEHGVTFRSHIDGKAYEMTPERSIEIQGLLDSDIQMQLDECVALPSPEKNTERAMELSLRWAERCKVAFGDQPGKAMFGIVQGGDIARLRERSAEALKAMDLKGYSVGGLAVGEPQEVMLDMLEVVCPILPTEKPRYLMGVGTPDDILKSVARGIDMFDCVMPTRAGRHGLAFTRFGKVNLRNARHAEDHRPLDPQSDCPASRDYSRAYLHHLVKSGEALGAMLLTWNNLAYYQYLMKGIRAAIADGKFSDFTAETTEGWARGDMPAL.

The active-site Proton acceptor is aspartate 94. Substrate is bound by residues 94 to 98, aspartate 148, glutamine 191, and glycine 218; that span reads DSGGF. The segment at 249–255 is RNA binding; it reads GVGTPDD. The Nucleophile role is filled by aspartate 268. Positions 273-277 are RNA binding; important for wobble base 34 recognition; the sequence is TRAGR.

This sequence belongs to the queuine tRNA-ribosyltransferase family. Homodimer. Within each dimer, one monomer is responsible for RNA recognition and catalysis, while the other monomer binds to the replacement base PreQ1.

The catalysed reaction is 7-aminomethyl-7-carbaguanine + guanosine(34) in tRNA = 7-aminomethyl-7-carbaguanosine(34) in tRNA + guanine. The protein operates within tRNA modification; tRNA-queuosine biosynthesis. In terms of biological role, catalyzes the base-exchange of a guanine (G) residue with the queuine precursor 7-aminomethyl-7-deazaguanine (PreQ1) at position 34 (anticodon wobble position) in tRNAs with GU(N) anticodons (tRNA-Asp, -Asn, -His and -Tyr). Catalysis occurs through a double-displacement mechanism. The nucleophile active site attacks the C1' of nucleotide 34 to detach the guanine base from the RNA, forming a covalent enzyme-RNA intermediate. The proton acceptor active site deprotonates the incoming PreQ1, allowing a nucleophilic attack on the C1' of the ribose to form the product. After dissociation, two additional enzymatic reactions on the tRNA convert PreQ1 to queuine (Q), resulting in the hypermodified nucleoside queuosine (7-(((4,5-cis-dihydroxy-2-cyclopenten-1-yl)amino)methyl)-7-deazaguanosine). The sequence is that of Queuine tRNA-ribosyltransferase from Brucella melitensis biotype 1 (strain ATCC 23456 / CCUG 17765 / NCTC 10094 / 16M).